The chain runs to 384 residues: MKQVSIIGGTGSIGTQTLDVIAANPDRFQLVSFAFGKNIEVALPWLNRLRPELVAVLDETVKEQLEAVLDYSPTVLVGEDGLIAVATADQADIVITAVVGAVGLRPTLAAIEAGKSIGLANKETLVTAGHLVMKKAREKGVAILPVDSEHAAIFQCLNGERRQDVRQIILTASGGSFRDQTREQLANVTVEQALNHPNWSMGAKITIDSATMMNKGFEVIEAHWLFDVTYDEIDVVLHRESIIHSMVEFNDGAVMAQLGMPDMREPIQYALTYPSRLEIKGGERLNLKQIGRLNFAEASFERYPLLRLAFEAGRAGGSMPSVLNAANEQAVDRFLKGEISFLEIEASVEAALQAHENIEDPSLDQILESDRWARAFVASLSLAN.

The NADPH site is built by threonine 10, glycine 11, serine 12, isoleucine 13, glycine 36, lysine 37, asparagine 38, and asparagine 121. Position 122 (lysine 122) interacts with 1-deoxy-D-xylulose 5-phosphate. Glutamate 123 provides a ligand contact to NADPH. Residue aspartate 147 participates in Mn(2+) binding. 4 residues coordinate 1-deoxy-D-xylulose 5-phosphate: serine 148, glutamate 149, serine 173, and histidine 196. Glutamate 149 provides a ligand contact to Mn(2+). Position 202 (glycine 202) interacts with NADPH. 4 residues coordinate 1-deoxy-D-xylulose 5-phosphate: serine 209, asparagine 214, lysine 215, and glutamate 218. Mn(2+) is bound at residue glutamate 218.

This sequence belongs to the DXR family. Mg(2+) serves as cofactor. It depends on Mn(2+) as a cofactor.

The catalysed reaction is 2-C-methyl-D-erythritol 4-phosphate + NADP(+) = 1-deoxy-D-xylulose 5-phosphate + NADPH + H(+). It participates in isoprenoid biosynthesis; isopentenyl diphosphate biosynthesis via DXP pathway; isopentenyl diphosphate from 1-deoxy-D-xylulose 5-phosphate: step 1/6. Catalyzes the NADPH-dependent rearrangement and reduction of 1-deoxy-D-xylulose-5-phosphate (DXP) to 2-C-methyl-D-erythritol 4-phosphate (MEP). This chain is 1-deoxy-D-xylulose 5-phosphate reductoisomerase, found in Exiguobacterium sibiricum (strain DSM 17290 / CCUG 55495 / CIP 109462 / JCM 13490 / 255-15).